A 350-amino-acid chain; its full sequence is sn-1 oleoyl-lipid 12-desaturase (350 aa).

Helical transmembrane passes span 41-61 (AWTQ…SLAI) and 64-84 (WFLL…FFVI). The Histidine box-1 motif lies at 86 to 90 (HDCGH). The helical transmembrane segment at 98–118 (WVNDLVGHIFMMPLIYPFHSW) threads the bilayer. The Histidine box-2 motif lies at 122–126 (HNHHH). The next 2 helical transmembrane spans lie at 196 to 216 (VAVV…TTGI) and 219 to 239 (FVKF…TFTI). The Histidine box-3 signature appears at 287 to 291 (HHLST).

The protein belongs to the fatty acid desaturase type 2 family. It depends on Fe(2+) as a cofactor.

The protein resides in the membrane. It catalyses the reaction a 1-[(9Z)-octadecenoyl]-2-acyl-glycerolipid + 2 reduced [2Fe-2S]-[ferredoxin] + O2 + 2 H(+) = a 1-[(9Z,12Z)-octadecdienoyl]-2-acyl-glycerolipid + 2 oxidized [2Fe-2S]-[ferredoxin] + 2 H2O. It functions in the pathway lipid metabolism; polyunsaturated fatty acid biosynthesis. Its function is as follows. Desaturase involved in fatty acid biosynthesis. Introduces a double bond at carbon 12 of oleoyl groups (18:1) attached to the sn-1 position of the glycerol moiety of membrane glycerolipids. This Anabaena variabilis protein is sn-1 oleoyl-lipid 12-desaturase.